The chain runs to 671 residues: Palmitoleoyl-protein carboxylesterase NOTUM (671 aa).

A signal peptide spans 1–46 (MAVEQIDKMAAKAGEATNKWIKPQQPLLTLLLLLATFSQLPAVCSS). A glycan (N-linked (GlcNAc...) asparagine) is linked at Asn-95. Active-site charge relay system residues include Ser-237 and Asp-338. A glycan (N-linked (GlcNAc...) asparagine) is linked at Asn-372. His-384 (charge relay system) is an active-site residue. The tract at residues 411 to 592 (HSTRSRRHDK…TKSKKRHRVP (182 aa)) is disordered. Residues 439-454 (NQRHQRHRQRLQRQKH) are compositionally biased toward basic residues. Basic and acidic residues predominate over residues 470–486 (LSKEEREERKRLRQEQR). Residues 487-497 (QRRKQRRRQQQ) are compositionally biased toward basic residues. The span at 505-514 (QEHRNKKDNS) shows a compositional bias: basic and acidic residues. Residues 570–583 (PQKTRSSNNASAGT) are compositionally biased toward polar residues. N-linked (GlcNAc...) asparagine glycans are attached at residues Asn-578 and Asn-612.

The protein belongs to the pectinacetylesterase family. Notum subfamily.

The protein resides in the secreted. The protein localises to the cell surface. The catalysed reaction is [Wnt protein]-O-(9Z)-hexadecenoyl-L-serine + H2O = [Wnt protein]-L-serine + (9Z)-hexadecenoate + H(+). Functionally, carboxylesterase that acts as a key negative regulator of the Wnt signaling pathway by specifically mediating depalmitoleoylation of WNT proteins. Serine palmitoleoylation of WNT proteins is required for efficient binding to frizzled receptors. Also acts as a regulator of long-range activity of Hedgehog (hh), possibly by regulating the switch between low and high level hh pathway signaling. This chain is Palmitoleoyl-protein carboxylesterase NOTUM, found in Drosophila melanogaster (Fruit fly).